The chain runs to 460 residues: Proline--tRNA ligase (460 aa).

It belongs to the class-II aminoacyl-tRNA synthetase family. ProS type 3 subfamily. In terms of assembly, homodimer.

Its subcellular location is the cytoplasm. It carries out the reaction tRNA(Pro) + L-proline + ATP = L-prolyl-tRNA(Pro) + AMP + diphosphate. Catalyzes the attachment of proline to tRNA(Pro) in a two-step reaction: proline is first activated by ATP to form Pro-AMP and then transferred to the acceptor end of tRNA(Pro). The sequence is that of Proline--tRNA ligase from Methanococcus maripaludis (strain DSM 14266 / JCM 13030 / NBRC 101832 / S2 / LL).